The primary structure comprises 136 residues: Keratin-associated protein 9-3 (136 aa).

11 repeat units span residues Cys-3–Ser-7, Cys-21–Thr-25, Cys-31–Ser-35, Cys-36–Ser-40, Cys-41–Ser-45, Cys-46–Gly-50, Cys-87–Ser-91, Cys-97–His-101, Cys-107–Ser-111, Cys-117–Ala-121, and Cys-126–Ser-130. The tract at residues Cys-21–Ser-130 is 11 X 5 AA repeats of C-C-[AEQVR]-[ALPTV]-[AGHST].

The protein belongs to the KRTAP type 9 family. As to quaternary structure, interacts with hair keratins.

In terms of biological role, in the hair cortex, hair keratin intermediate filaments are embedded in an interfilamentous matrix, consisting of hair keratin-associated proteins (KRTAP), which are essential for the formation of a rigid and resistant hair shaft through their extensive disulfide bond cross-linking with abundant cysteine residues of hair keratins. The matrix proteins include the high-sulfur and high-glycine-tyrosine keratins. The protein is Keratin-associated protein 9-3 of Mus musculus (Mouse).